Consider the following 81-residue polypeptide: Large ribosomal subunit protein bL31B (81 aa).

It belongs to the bacterial ribosomal protein bL31 family. Type B subfamily. In terms of assembly, part of the 50S ribosomal subunit.

In Borreliella burgdorferi (strain ZS7) (Borrelia burgdorferi), this protein is Large ribosomal subunit protein bL31B.